Here is a 258-residue protein sequence, read N- to C-terminus: Acetylglutamate kinase (258 aa).

Substrate contacts are provided by residues 41–42, R63, and N156; that span reads GG.

It belongs to the acetylglutamate kinase family. ArgB subfamily.

The protein localises to the cytoplasm. It catalyses the reaction N-acetyl-L-glutamate + ATP = N-acetyl-L-glutamyl 5-phosphate + ADP. Its pathway is amino-acid biosynthesis; L-arginine biosynthesis; N(2)-acetyl-L-ornithine from L-glutamate: step 2/4. Catalyzes the ATP-dependent phosphorylation of N-acetyl-L-glutamate. The chain is Acetylglutamate kinase from Geobacillus kaustophilus (strain HTA426).